Consider the following 303-residue polypeptide: MADLSVNIGELQMKNPVMTASGTFGYGEEFSDFIDIARIGGIIVKGTTLHKREGNPYPRMAETPSGMLNAVGLQNKGVDYFVEQIYPRIKDIQTNMIVNVSGSAIEDYVKTAEIINELDKIPAIELNISCPNVKQGGMAFGVSAKGASEVVKAVRAAYKKTLIVKLSPNVTDITEIARAAEESGADSVSLINTLLGMAIDAERKRPILSTVTGGMSGAAVKPIALRMVWQVAKAVNIPVIGLGGIMNWKDAVEFMLAGASAIQIGTANFIDPAVTIKVEDGINNYLERHGCKSVKEIIGALEV.

FMN contacts are provided by residues Ser21 and 45–46 (KG). Substrate contacts are provided by residues Lys45 and 69–73 (NAVGL). FMN-binding residues include Asn99 and Asn127. Residue Asn127 participates in substrate binding. Cys130 functions as the Nucleophile in the catalytic mechanism. FMN is bound by residues Lys165 and Ile191. Position 192 to 193 (192 to 193 (NT)) interacts with substrate. Residues Gly217, 243-244 (GG), and 265-266 (GT) each bind FMN.

The protein belongs to the dihydroorotate dehydrogenase family. Type 1 subfamily. As to quaternary structure, heterotetramer of 2 PyrK and 2 PyrD type B subunits. FMN serves as cofactor.

It is found in the cytoplasm. The enzyme catalyses (S)-dihydroorotate + NAD(+) = orotate + NADH + H(+). Its pathway is pyrimidine metabolism; UMP biosynthesis via de novo pathway; orotate from (S)-dihydroorotate (NAD(+) route): step 1/1. Functionally, catalyzes the conversion of dihydroorotate to orotate with NAD(+) as electron acceptor. The sequence is that of Dihydroorotate dehydrogenase B (NAD(+)), catalytic subunit (pyrD) from Bacteroides thetaiotaomicron (strain ATCC 29148 / DSM 2079 / JCM 5827 / CCUG 10774 / NCTC 10582 / VPI-5482 / E50).